A 492-amino-acid chain; its full sequence is Gamma-aminobutyric acid receptor subunit alpha-3 (492 aa).

Residues 1-28 (MIITQMSQFYMAGLGLLFLINILPGTTG) form the signal peptide. The Extracellular segment spans residues 29–274 (QVESRRQEPG…MTTHFHLKRK (246 aa)). An N-linked (GlcNAc...) asparagine glycan is attached at asparagine 63. 4-aminobutanoate is bound at residue arginine 119. N-linked (GlcNAc...) asparagine glycans are attached at residues asparagine 163 and asparagine 176. Threonine 182 is a binding site for 4-aminobutanoate. A disulfide bond links cysteine 191 and cysteine 205. The N-linked (GlcNAc...) asparagine glycan is linked to asparagine 228. The helical transmembrane segment at 275-295 (IGYFVIQTYLPCIMTVILSQV) threads the bilayer. The Cytoplasmic portion of the chain corresponds to 296–305 (SFWLNRESVP). Residues 306–325 (ARTVFGVTTVLTMTTLSISA) traverse the membrane as a helical segment. Residues 326 to 336 (RNSLPKVAYAT) are Extracellular-facing. Residues 337–357 (AMDWFMAVCYAFVFSALIEFA) form a helical membrane-spanning segment. The Cytoplasmic segment spans residues 358-457 (TVNYFTKRSW…TYNSVSKVDK (100 aa)). At serine 426 the chain carries Phosphoserine. Threonine 427 is subject to Phosphothreonine. Phosphoserine is present on serine 433. A helical membrane pass occupies residues 458–478 (ISRIIFPVLFAIFNLVYWATY). The Extracellular portion of the chain corresponds to 479 to 492 (VNRESAIKGMIRKQ).

Belongs to the ligand-gated ion channel (TC 1.A.9) family. Gamma-aminobutyric acid receptor (TC 1.A.9.5) subfamily. GABRA3 sub-subfamily. As to quaternary structure, heteropentamer, formed by a combination of alpha (GABRA1-6), beta (GABRB1-3), gamma (GABRG1-3), delta (GABRD), epsilon (GABRE), rho (GABRR1-3), pi (GABRP) and theta (GABRQ) chains, each subunit exhibiting distinct physiological and pharmacological properties. Binds UBQLN1. Interacts with GPHN.

It is found in the postsynaptic cell membrane. The protein resides in the cell membrane. It carries out the reaction chloride(in) = chloride(out). Alpha subunit of the heteropentameric ligand-gated chloride channel gated by gamma-aminobutyric acid (GABA), a major inhibitory neurotransmitter in the brain. GABA-gated chloride channels, also named GABA(A) receptors (GABAAR), consist of five subunits arranged around a central pore and contain GABA active binding site(s) located at the alpha and beta subunit interface(s). When activated by GABA, GABAARs selectively allow the flow of chloride anions across the cell membrane down their electrochemical gradient. Chloride influx into the postsynaptic neuron following GABAAR opening decreases the neuron ability to generate a new action potential, thereby reducing nerve transmission. The chain is Gamma-aminobutyric acid receptor subunit alpha-3 (GABRA3) from Bos taurus (Bovine).